Reading from the N-terminus, the 839-residue chain is MAIGITACVLSLINYQGLAYSAALINEPIQACVIAREVDLTDDIRTKFAQCLGWQADQSSPVCLGFYKPIAVTPLASPDEVRILADTASFYRTQRSTLSGHVEMQQGQRVVNAQTAYVYRDPKTNEVTKIEFLNHVRYLEPDRMMIARKAVVYPQDKSGEVEDVLYRFNTNRSNALLPAWGRASLIKRFANQDYFLKEATYTTCAPQDKAWAIEAESISIDNEKGKGIARNAKLRIHEWPVLYTPYLSFPTNRDRKSGFLMPIVGYSNVGGADLGIPYYWNMAPNYDMTLVPHLYTKRGLMLGGQFRYLTSKSTGTFNGNFLPKDKAFGRFLQDNEVEFPQIRGLSTNRWEVNFVDSTQFLSDLQLNVNFQQVSDDYYLQDFSTNLASVTQRQLLRQADLTYTTENWTFRGMGQSYQTLHPINEIPVSPVYERLPQLMARGYYDDLPFNAQFNILGQYDQFHWPNDSWNIALNNMPQGPRFHLNPILSVPMMKPWGYVTPSVQFVENYYDISRNYTWGTSRANYNLTIPRYSLDGGLYFERDLHLKGTYYIQTLEPRLFYLRVPYYNQTLIPVYDSGFMIFNVDQLFRTNRFSGFDRIGDANQLSYALTTRWLEDESGAEKANFSIGQIKYFSERRVQLCQSPTGFCTDNPDTFGNLSSTFGTSPVASRAVYKFNPAWGITGDYIWDPATRATNNADLNLHYQPARNAIINGGYSYLVNGDVTQVRNNDTENNALHQAILSAAWPLSEKWSGIGAYSYNISKNYSMMSFLGVQYDSCCWAMRILGGRIFRSLNEEFEPQYNNNIYLQILLKGLGSVASSDPSGILNTYIPGYYDPFRRR.

The N-terminal stretch at 1 to 21 is a signal peptide; the sequence is MAIGITACVLSLINYQGLAYS.

It belongs to the LptD family. Component of the lipopolysaccharide transport and assembly complex. Interacts with LptE and LptA.

Its subcellular location is the cell outer membrane. Together with LptE, is involved in the assembly of lipopolysaccharide (LPS) at the surface of the outer membrane. The polypeptide is LPS-assembly protein LptD (Legionella pneumophila subsp. pneumophila (strain Philadelphia 1 / ATCC 33152 / DSM 7513)).